The following is a 480-amino-acid chain: Aromatic-L-amino-acid decarboxylase (480 aa).

Position 1 is an N-acetylmethionine (M1). 2 repeat units span residues R58–E115 and M118–A178. The tract at residues R58–A178 is 2 X approximate tandem repeats. T82 is a binding site for substrate. Residues A148 and S149 each coordinate pyridoxal 5'-phosphate. H192 serves as a coordination point for substrate. Residues T246 and N300 each coordinate pyridoxal 5'-phosphate. The residue at position 303 (K303) is an N6-(pyridoxal phosphate)lysine.

This sequence belongs to the group II decarboxylase family. Homodimer. Pyridoxal 5'-phosphate serves as cofactor.

The enzyme catalyses L-dopa + H(+) = dopamine + CO2. It catalyses the reaction 5-hydroxy-L-tryptophan + H(+) = serotonin + CO2. It participates in catecholamine biosynthesis; dopamine biosynthesis; dopamine from L-tyrosine: step 2/2. In terms of biological role, catalyzes the decarboxylation of L-3,4-dihydroxyphenylalanine (DOPA) to dopamine and L-5-hydroxytryptophan to serotonin. This chain is Aromatic-L-amino-acid decarboxylase, found in Rattus norvegicus (Rat).